A 459-amino-acid chain; its full sequence is Bifunctional protein GlmU (459 aa).

The tract at residues 1–229 (MSNFAIILAA…FDESLGVNDR (229 aa)) is pyrophosphorylase. UDP-N-acetyl-alpha-D-glucosamine is bound by residues 8-11 (LAAG), K22, Q72, and 77-78 (GT). D102 is a binding site for Mg(2+). The UDP-N-acetyl-alpha-D-glucosamine site is built by G139, E154, N169, and N227. N227 is a Mg(2+) binding site. Residues 230 to 250 (VALATAESVMRRRINHKHMVN) are linker. The N-acetyltransferase stretch occupies residues 251–459 (GVSFVNPEAT…TRLPHHPKNQ (209 aa)). UDP-N-acetyl-alpha-D-glucosamine is bound by residues R332 and K350. Catalysis depends on H362, which acts as the Proton acceptor. UDP-N-acetyl-alpha-D-glucosamine contacts are provided by Y365 and N376. Residues A379, 385-386 (NY), S404, A422, and R439 contribute to the acetyl-CoA site.

It in the N-terminal section; belongs to the N-acetylglucosamine-1-phosphate uridyltransferase family. This sequence in the C-terminal section; belongs to the transferase hexapeptide repeat family. In terms of assembly, homotrimer. Mg(2+) serves as cofactor.

The protein localises to the cytoplasm. It carries out the reaction alpha-D-glucosamine 1-phosphate + acetyl-CoA = N-acetyl-alpha-D-glucosamine 1-phosphate + CoA + H(+). The enzyme catalyses N-acetyl-alpha-D-glucosamine 1-phosphate + UTP + H(+) = UDP-N-acetyl-alpha-D-glucosamine + diphosphate. Its pathway is nucleotide-sugar biosynthesis; UDP-N-acetyl-alpha-D-glucosamine biosynthesis; N-acetyl-alpha-D-glucosamine 1-phosphate from alpha-D-glucosamine 6-phosphate (route II): step 2/2. It participates in nucleotide-sugar biosynthesis; UDP-N-acetyl-alpha-D-glucosamine biosynthesis; UDP-N-acetyl-alpha-D-glucosamine from N-acetyl-alpha-D-glucosamine 1-phosphate: step 1/1. It functions in the pathway bacterial outer membrane biogenesis; LPS lipid A biosynthesis. Catalyzes the last two sequential reactions in the de novo biosynthetic pathway for UDP-N-acetylglucosamine (UDP-GlcNAc). The C-terminal domain catalyzes the transfer of acetyl group from acetyl coenzyme A to glucosamine-1-phosphate (GlcN-1-P) to produce N-acetylglucosamine-1-phosphate (GlcNAc-1-P), which is converted into UDP-GlcNAc by the transfer of uridine 5-monophosphate (from uridine 5-triphosphate), a reaction catalyzed by the N-terminal domain. The chain is Bifunctional protein GlmU from Streptococcus pneumoniae (strain JJA).